Reading from the N-terminus, the 364-residue chain is tRNA 2-selenouridine synthase (364 aa).

The region spanning 14 to 137 (LLADTPLIDV…LRQTAIQATW (124 aa)) is the Rhodanese domain. C97 (S-selanylcysteine intermediate) is an active-site residue.

This sequence belongs to the SelU family. In terms of assembly, monomer.

It catalyses the reaction 5-methylaminomethyl-2-thiouridine(34) in tRNA + selenophosphate + (2E)-geranyl diphosphate + H2O + H(+) = 5-methylaminomethyl-2-selenouridine(34) in tRNA + (2E)-thiogeraniol + phosphate + diphosphate. It carries out the reaction 5-methylaminomethyl-2-thiouridine(34) in tRNA + (2E)-geranyl diphosphate = 5-methylaminomethyl-S-(2E)-geranyl-thiouridine(34) in tRNA + diphosphate. The catalysed reaction is 5-methylaminomethyl-S-(2E)-geranyl-thiouridine(34) in tRNA + selenophosphate + H(+) = 5-methylaminomethyl-2-(Se-phospho)selenouridine(34) in tRNA + (2E)-thiogeraniol. The enzyme catalyses 5-methylaminomethyl-2-(Se-phospho)selenouridine(34) in tRNA + H2O = 5-methylaminomethyl-2-selenouridine(34) in tRNA + phosphate. Its function is as follows. Involved in the post-transcriptional modification of the uridine at the wobble position (U34) of tRNA(Lys), tRNA(Glu) and tRNA(Gln). Catalyzes the conversion of 2-thiouridine (S2U-RNA) to 2-selenouridine (Se2U-RNA). Acts in a two-step process involving geranylation of 2-thiouridine (S2U) to S-geranyl-2-thiouridine (geS2U) and subsequent selenation of the latter derivative to 2-selenouridine (Se2U) in the tRNA chain. In Salmonella choleraesuis (strain SC-B67), this protein is tRNA 2-selenouridine synthase.